A 1053-amino-acid polypeptide reads, in one-letter code: Serine/threonine-protein phosphatase 6 regulatory ankyrin repeat subunit A (1053 aa).

ANK repeat units lie at residues 40-69, 73-102, 106-135, 139-168, 172-201, 205-234, 238-267, 271-301, 305-334, 338-367, 371-400, 404-433, 437-466, 470-500, 504-534, 549-578, 582-611, 616-645, 652-681, 685-714, 718-747, 755-784, 787-817, 822-851, 855-885, 889-918, and 925-954; these read EKRTPLHAAAYLGDAEIIELLILSGARVNA, KWLTPLHRAVASCSEEAVQVLLKHSADVNA, NWQTPLHIAAANKAVKCAEALVPLLSNVNV, AGRTALHHAAFSGHGEMVKLLLSRGANINA, KDRRAIHWAAYMGHIEVVKLLVSHGAEVTC, KSYTPLHAAASSGMISVVKYLLDLGVDMNE, YGNTPLHVACYNGQDVVVNELIDCGAIVNQ, KGFTPLHFAAASTHGALCLELLVGNGADVNM, DGKTPLHMTALHGRFSRSQTIIQSGAVIDC, NGNTPLHIAARYGHELLINTLITSGADTAK, HGMFPLHLAALSGFSDCCRKLLSSGFDIDT, FGRTCLHAAAAGGNLECLNLLLNTGADFNK, FGRSPLHYAAANCNYQCLFALVGSGASVND, RGCTPLHYAATSDTDGKCLEYLLRNDANPGI, QGYNAVHYSAAYGHRLCLQLIASETPLDVLM, ATISPLHLAAYHGHHQALEVLVQSLLDLDV, SGRTPLDLAAFKGHVECVDVLINQGASILV, LKRTPIHAAATNGHSECLRLLIGNAEPQNA, NGQTPLMLSVLNGHTDCVYSLLNKGANVDA, WGRTALHRGAVTGHEECVDALLQHGAKCLL, RGRTPIHLSAACGHIGVLGALLQSAASMDA, HGYTALHWACYNGHETCVELLLEQEVFQKT, NAFSPLHCAVINDNEGAAEMLIDTLGASIVN, KGRTPLHAAAFTDHVECLQLLLSHNAQVNS, TGKTPLMMAAENGQTNTVEMLVSSASAELTL, SKNTALHLACSKGHETSALLILEKITDRNL, and ALQTPLHVAARNGLTMVVQELLGKGASVLA. Residues Ser1007 and Ser1011 each carry the phosphoserine modification.

As to quaternary structure, protein phosphatase 6 (PP6) holoenzyme is proposed to be a heterotrimeric complex formed by the catalytic subunit, a SAPS domain-containing subunit (PP6R) and an ankyrin repeat-domain containing regulatory subunit (ARS). Interacts with PPP6C, PPP6R1 and PPP6R3. Interacts with PPP1C and HNRPK. Post-translationally, ubiquitinated by the ECS(RAB40C) complex leading to its degradation and decreased PP6 activity.

The protein resides in the nucleus. It is found in the nucleoplasm. Its subcellular location is the cytoplasm. The protein localises to the cytosol. It localises to the cell projection. The protein resides in the lamellipodium. Its function is as follows. Regulatory subunit of protein phosphatase 6 (PP6) that may be involved in the recognition of phosphoprotein substrates. Involved in the PP6-mediated dephosphorylation of NFKBIE opposing its degradation in response to TNF-alpha. Selectively inhibits the phosphatase activity of PPP1C. Targets PPP1C to modulate HNRPK phosphorylation. Involved in the PP6-mediated dephosphorylation of MOB1 and induced focal adhesion assembly during cell migration. This Homo sapiens (Human) protein is Serine/threonine-protein phosphatase 6 regulatory ankyrin repeat subunit A.